Consider the following 297-residue polypeptide: Putative peptidyl-prolyl cis-trans isomerase YacD (297 aa).

Positions 1–32 (MKSRTIWTIILGALLVCCIAVAYTLTKSQAGA) are cleaved as a signal peptide. Residues 154–247 (DDSYRIRHIV…NGYAIIQLKE (94 aa)) form the PpiC domain.

The enzyme catalyses [protein]-peptidylproline (omega=180) = [protein]-peptidylproline (omega=0). This chain is Putative peptidyl-prolyl cis-trans isomerase YacD (yacD), found in Bacillus subtilis (strain 168).